The sequence spans 418 residues: Serine hydroxymethyltransferase (418 aa).

(6S)-5,6,7,8-tetrahydrofolate is bound by residues leucine 121 and 125 to 127 (GHL). An N6-(pyridoxal phosphate)lysine modification is found at lysine 230. Residues glutamate 246 and 355–357 (SPF) each bind (6S)-5,6,7,8-tetrahydrofolate.

It belongs to the SHMT family. As to quaternary structure, homodimer. Pyridoxal 5'-phosphate is required as a cofactor.

Its subcellular location is the cytoplasm. The enzyme catalyses (6R)-5,10-methylene-5,6,7,8-tetrahydrofolate + glycine + H2O = (6S)-5,6,7,8-tetrahydrofolate + L-serine. The protein operates within one-carbon metabolism; tetrahydrofolate interconversion. It functions in the pathway amino-acid biosynthesis; glycine biosynthesis; glycine from L-serine: step 1/1. In terms of biological role, catalyzes the reversible interconversion of serine and glycine with tetrahydrofolate (THF) serving as the one-carbon carrier. This reaction serves as the major source of one-carbon groups required for the biosynthesis of purines, thymidylate, methionine, and other important biomolecules. Also exhibits THF-independent aldolase activity toward beta-hydroxyamino acids, producing glycine and aldehydes, via a retro-aldol mechanism. The polypeptide is Serine hydroxymethyltransferase (Streptococcus pneumoniae serotype 19F (strain G54)).